Consider the following 58-residue polypeptide: Large ribosomal subunit protein uL30 (58 aa).

It belongs to the universal ribosomal protein uL30 family. In terms of assembly, part of the 50S ribosomal subunit.

The polypeptide is Large ribosomal subunit protein uL30 (Porphyromonas gingivalis (strain ATCC 33277 / DSM 20709 / CIP 103683 / JCM 12257 / NCTC 11834 / 2561)).